Reading from the N-terminus, the 179-residue chain is MTPRKTLRDYIRTIPDFPHEGIMFRDVTTLFADPRGFRIAVDQLLDPFVDVKIDKVAGLEARGFILGGAVAHQLSVGFVPIRKKGKLPGKTIAQDYVLEYGKATVEIHDDAFQPGERVLLVDDLLATGGTARAGIQLIERLGAEVVGCAFLIDLPDLGGRKLLEEMDMGVHALTSFDGD.

It belongs to the purine/pyrimidine phosphoribosyltransferase family. In terms of assembly, homodimer.

It is found in the cytoplasm. The enzyme catalyses AMP + diphosphate = 5-phospho-alpha-D-ribose 1-diphosphate + adenine. It functions in the pathway purine metabolism; AMP biosynthesis via salvage pathway; AMP from adenine: step 1/1. Catalyzes a salvage reaction resulting in the formation of AMP, that is energically less costly than de novo synthesis. This Dinoroseobacter shibae (strain DSM 16493 / NCIMB 14021 / DFL 12) protein is Adenine phosphoribosyltransferase.